A 431-amino-acid chain; its full sequence is Glutamate--tRNA ligase 1 (431 aa).

A 'HIGH' region motif is present at residues 6-16 (PSPTGDMHIGN). The short motif at 235–239 (KMSKR) is the 'KMSKS' region element. Lys238 contributes to the ATP binding site.

Belongs to the class-I aminoacyl-tRNA synthetase family. Glutamate--tRNA ligase type 1 subfamily. Monomer.

It localises to the cytoplasm. The catalysed reaction is tRNA(Glu) + L-glutamate + ATP = L-glutamyl-tRNA(Glu) + AMP + diphosphate. In terms of biological role, catalyzes the attachment of glutamate to tRNA(Glu) in a two-step reaction: glutamate is first activated by ATP to form Glu-AMP and then transferred to the acceptor end of tRNA(Glu). The sequence is that of Glutamate--tRNA ligase 1 from Campylobacter concisus (strain 13826).